We begin with the raw amino-acid sequence, 331 residues long: tRNA-cytidine(32) 2-sulfurtransferase (331 aa).

Residues 1-33 form a disordered region; it reads MNAPHMNDTAADAATLDDAAAPAGRPALTRREQ. Residues 8–23 are compositionally biased toward low complexity; the sequence is DTAADAATLDDAAAPA. The short motif at 71 to 76 is the PP-loop motif element; that stretch reads SGGKDS. [4Fe-4S] cluster-binding residues include C146, C149, and C237.

The protein belongs to the TtcA family. Homodimer. Mg(2+) is required as a cofactor. The cofactor is [4Fe-4S] cluster.

It localises to the cytoplasm. The catalysed reaction is cytidine(32) in tRNA + S-sulfanyl-L-cysteinyl-[cysteine desulfurase] + AH2 + ATP = 2-thiocytidine(32) in tRNA + L-cysteinyl-[cysteine desulfurase] + A + AMP + diphosphate + H(+). Its pathway is tRNA modification. Its function is as follows. Catalyzes the ATP-dependent 2-thiolation of cytidine in position 32 of tRNA, to form 2-thiocytidine (s(2)C32). The sulfur atoms are provided by the cysteine/cysteine desulfurase (IscS) system. The chain is tRNA-cytidine(32) 2-sulfurtransferase from Burkholderia cenocepacia (strain HI2424).